A 111-amino-acid chain; its full sequence is MKKIFSLVLLGIALFTFAFSSPALAADSVNGAKIFSANCASCHAGGKNLVQAQKTLKKADLEKYGMYSAEAIIAQVTNGKNAMPAFKGRLKPEQIEDVAAYVLGKADADWK.

A signal peptide spans 1-25 (MKKIFSLVLLGIALFTFAFSSPALA). The heme c site is built by Cys39, Cys42, His43, and Met83.

Belongs to the cytochrome c family. PetJ subfamily. In terms of assembly, monomer. Post-translationally, binds 1 heme c group covalently per subunit.

It localises to the cellular thylakoid lumen. Functions as an electron carrier between membrane-bound cytochrome b6-f and photosystem I in oxygenic photosynthesis. The chain is Cytochrome c6 (petJ) from Nostoc sp. (strain PCC 7120 / SAG 25.82 / UTEX 2576).